Reading from the N-terminus, the 1759-residue chain is Putative ATP-dependent RNA helicase TDRD12 (1759 aa).

The Tudor 1 domain maps to 74–153; sequence FQNLEQVWFS…KLSNTETRAV (80 aa). Residues 480–495 are compositionally biased toward low complexity; that stretch reads NSAASESSTKSSMDSS. The interval 480 to 506 is disordered; the sequence is NSAASESSTKSSMDSSRISDEDDLSSD. The Helicase ATP-binding domain maps to 611-789; it reads WGTILRGLST…DFLEPIVLKA (179 aa). ATP is bound at residue 624-631; sequence SPPRSGKT. The 158-residue stretch at 823 to 980 folds into the Helicase C-terminal domain; sequence NVLQFIDSVQ…NVPKILDEVS (158 aa). One can recognise a Tudor 2 domain in the interval 1335-1394; the sequence is GSNVGDIVLAKFPDDSMYERARIDHIYSEDKVKCFFVDQGDWRDVSTNDLATITENFITQ. Positions 1618 to 1704 constitute a CS domain; the sequence is LSKPKICWSQ…LMCRNWLALT (87 aa).

As to quaternary structure, interacts (via Tudor domain 2) with Siwi. Component of the PET complex, at least composed of EXD1, SIWI, TDRD12 and piRNAs. As to expression, expressed in the yolk cells. Not detected in yolk granules.

It is found in the chromosome. It localises to the cytoplasm. The protein localises to the cytosol. Its subcellular location is the nucleus membrane. It catalyses the reaction ATP + H2O = ADP + phosphate + H(+). Its function is as follows. Probable ATP-binding RNA helicase required during spermatogenesis to repress transposable elements and preventing their mobilization, which is essential for the germline integrity. Acts via the piRNA metabolic process, which mediates the repression of transposable elements during meiosis by forming complexes composed of piRNAs and Piwi proteins and governs the methylation and subsequent repression of transposons. This chain is Putative ATP-dependent RNA helicase TDRD12 (TDRD12), found in Bombyx mori (Silk moth).